The primary structure comprises 228 residues: Uracil-DNA glycosylase (228 aa).

D71 (proton acceptor) is an active-site residue.

Belongs to the uracil-DNA glycosylase (UDG) superfamily. UNG family.

It is found in the cytoplasm. The enzyme catalyses Hydrolyzes single-stranded DNA or mismatched double-stranded DNA and polynucleotides, releasing free uracil.. Excises uracil residues from the DNA which can arise as a result of misincorporation of dUMP residues by DNA polymerase or due to deamination of cytosine. The polypeptide is Uracil-DNA glycosylase (Thermobifida fusca (strain YX)).